The chain runs to 115 residues: Chondroitin proteoglycan 8 (115 aa).

An N-terminal signal peptide occupies residues 1-16; sequence MRPFILLALLVSVTVA. Residues 33 to 96 are disordered; the sequence is VRRTTRDASD…GSGAAEVTSV (64 aa). O-linked (Xyl...) (chondroitin sulfate) serine glycans are attached at residues Ser-61, Ser-63, Ser-84, Ser-88, and Ser-109.

The sequence is that of Chondroitin proteoglycan 8 from Caenorhabditis elegans.